An 84-amino-acid chain; its full sequence is Mitochondrial import inner membrane translocase subunit Tim9 (84 aa).

The Twin CX3C motif signature appears at 36-60 (CFQSCITNFRIRKLDDEEQLCVYKC). 2 disulfides stabilise this stretch: C36–C60 and C40–C56.

The protein belongs to the small Tim family. As to quaternary structure, heterohexamer; composed of 3 copies of timm9 and 3 copies of timm10, named soluble 70 kDa complex. Associates directly with the TIM22 complex, whose core is composed of timm22. Interacts with the transmembrane regions of multi-pass transmembrane proteins in transit.

It is found in the mitochondrion inner membrane. In terms of biological role, component of the TIM22 complex, a complex that mediates the import and insertion of multi-pass transmembrane proteins into the mitochondrial inner membrane. The TIM22 complex forms a twin-pore translocase that uses the membrane potential as external driving force. The polypeptide is Mitochondrial import inner membrane translocase subunit Tim9 (timm9) (Dictyostelium discoideum (Social amoeba)).